Here is a 368-residue protein sequence, read N- to C-terminus: tRNA-specific 2-thiouridylase MnmA (368 aa).

Residues 11 to 18 (GMSGGVDS) and M37 contribute to the ATP site. The interval 97–99 (NPD) is interaction with target base in tRNA. C102 serves as the catalytic Nucleophile. C102 and C199 are oxidised to a cystine. An ATP-binding site is contributed by G127. Positions 149-151 (KDQ) are interaction with tRNA. C199 (cysteine persulfide intermediate) is an active-site residue. Positions 311–312 (RY) are interaction with tRNA.

The protein belongs to the MnmA/TRMU family. Interacts with TusE.

Its subcellular location is the cytoplasm. It carries out the reaction S-sulfanyl-L-cysteinyl-[protein] + uridine(34) in tRNA + AH2 + ATP = 2-thiouridine(34) in tRNA + L-cysteinyl-[protein] + A + AMP + diphosphate + H(+). In terms of biological role, catalyzes the 2-thiolation of uridine at the wobble position (U34) of tRNA(Lys), tRNA(Glu) and tRNA(Gln), leading to the formation of s(2)U34, the first step of tRNA-mnm(5)s(2)U34 synthesis. Sulfur is provided by IscS, via a sulfur-relay system. Binds ATP and its substrate tRNAs. In Shigella boydii serotype 4 (strain Sb227), this protein is tRNA-specific 2-thiouridylase MnmA.